A 91-amino-acid polypeptide reads, in one-letter code: Large ribosomal subunit protein uL22 (91 aa).

It belongs to the universal ribosomal protein uL22 family. Part of the 50S ribosomal subunit.

This protein binds specifically to 23S rRNA; its binding is stimulated by other ribosomal proteins, e.g. L4, L17, and L20. It is important during the early stages of 50S assembly. It makes multiple contacts with different domains of the 23S rRNA in the assembled 50S subunit and ribosome. Its function is as follows. The globular domain of the protein is located near the polypeptide exit tunnel on the outside of the subunit, while an extended beta-hairpin is found that lines the wall of the exit tunnel in the center of the 70S ribosome. This chain is Large ribosomal subunit protein uL22 (rplV), found in Ash yellows phytoplasma.